A 919-amino-acid chain; its full sequence is Isoleucine--tRNA ligase (919 aa).

The 'HIGH' region motif lies at 57–67; the sequence is PYANGHIHIGT. Glu553 is a binding site for L-isoleucyl-5'-AMP. Residues 594–598 carry the 'KMSKS' region motif; the sequence is KMSKS. An ATP-binding site is contributed by Lys597. Zn(2+)-binding residues include Cys887, Cys890, Cys907, and Cys910.

The protein belongs to the class-I aminoacyl-tRNA synthetase family. IleS type 1 subfamily. In terms of assembly, monomer. Zn(2+) is required as a cofactor.

The protein localises to the cytoplasm. The enzyme catalyses tRNA(Ile) + L-isoleucine + ATP = L-isoleucyl-tRNA(Ile) + AMP + diphosphate. Catalyzes the attachment of isoleucine to tRNA(Ile). As IleRS can inadvertently accommodate and process structurally similar amino acids such as valine, to avoid such errors it has two additional distinct tRNA(Ile)-dependent editing activities. One activity is designated as 'pretransfer' editing and involves the hydrolysis of activated Val-AMP. The other activity is designated 'posttransfer' editing and involves deacylation of mischarged Val-tRNA(Ile). The polypeptide is Isoleucine--tRNA ligase (Thermotoga petrophila (strain ATCC BAA-488 / DSM 13995 / JCM 10881 / RKU-1)).